Here is a 160-residue protein sequence, read N- to C-terminus: Transcription elongation factor GreA (160 aa).

Positions Leu-43–Ile-75 form a coiled coil.

The protein belongs to the GreA/GreB family.

Its function is as follows. Necessary for efficient RNA polymerase transcription elongation past template-encoded arresting sites. The arresting sites in DNA have the property of trapping a certain fraction of elongating RNA polymerases that pass through, resulting in locked ternary complexes. Cleavage of the nascent transcript by cleavage factors such as GreA or GreB allows the resumption of elongation from the new 3'terminus. GreA releases sequences of 2 to 3 nucleotides. The protein is Transcription elongation factor GreA of Prosthecochloris aestuarii (strain DSM 271 / SK 413).